The chain runs to 189 residues: MTEYKLVVVGAGGVGKSALTIQLIQNHFVDEYDPTIEDSYRKQVVIDGETCLLDILDTAGQEEYSAMRDQYMRTGEGFLLVFAVNSAKSFEDIGTYREQIKRVKDAEEVPMVLVGNKCDLASWNVNNEQAREVAKQYGIPYIETSAKTRMGVDDAFYTLVREIRKDKDNKGRRGRKMNKPNRRFKCKML.

10 to 17 lines the GTP pocket; it reads GAGGVGKS. The Effector region signature appears at 32 to 40; it reads YDPTIEDSY. Residues 57–61 and 116–119 each bind GTP; these read DTAGQ and NKCD. A Cysteine methyl ester modification is found at C186. A lipid anchor (S-geranylgeranyl cysteine) is attached at C186. A propeptide spans 187–189 (removed in mature form); the sequence is KML.

It belongs to the small GTPase superfamily. Ras family.

The protein resides in the cell membrane. The enzyme catalyses GTP + H2O = GDP + phosphate + H(+). Its activity is regulated as follows. Alternates between an inactive form bound to GDP and an active form bound to GTP. Activated by a guanine nucleotide-exchange factor (GEF) and inactivated by a GTPase-activating protein (GAP). Functionally, ras proteins bind GDP/GTP and possess intrinsic GTPase activity. Plays a role in eye development by regulating cell growth, survival of postmitotic ommatidial cells and differentiation of photoreceptor cells. During larval development, mediates Ptth/tor signaling leading to the production of ecdysone, a hormone required for the initiation of metamorphosis. The chain is Ras-like protein 1 from Drosophila ananassae (Fruit fly).